The chain runs to 407 residues: Multifunctional CCA protein (407 aa).

Residues glycine 8 and arginine 11 each coordinate ATP. CTP-binding residues include glycine 8 and arginine 11. Mg(2+) contacts are provided by aspartate 21 and aspartate 23. ATP contacts are provided by arginine 91, arginine 137, and arginine 140. Positions 91, 137, and 140 each coordinate CTP. Residues 228 to 329 form the HD domain; the sequence is TGVHALMALA…VALFDRVDAW (102 aa).

It belongs to the tRNA nucleotidyltransferase/poly(A) polymerase family. Bacterial CCA-adding enzyme type 1 subfamily. As to quaternary structure, monomer. Can also form homodimers and oligomers. It depends on Mg(2+) as a cofactor. Ni(2+) serves as cofactor.

The enzyme catalyses a tRNA precursor + 2 CTP + ATP = a tRNA with a 3' CCA end + 3 diphosphate. It carries out the reaction a tRNA with a 3' CCA end + 2 CTP + ATP = a tRNA with a 3' CCACCA end + 3 diphosphate. Its function is as follows. Catalyzes the addition and repair of the essential 3'-terminal CCA sequence in tRNAs without using a nucleic acid template. Adds these three nucleotides in the order of C, C, and A to the tRNA nucleotide-73, using CTP and ATP as substrates and producing inorganic pyrophosphate. tRNA 3'-terminal CCA addition is required both for tRNA processing and repair. Also involved in tRNA surveillance by mediating tandem CCA addition to generate a CCACCA at the 3' terminus of unstable tRNAs. While stable tRNAs receive only 3'-terminal CCA, unstable tRNAs are marked with CCACCA and rapidly degraded. The polypeptide is Multifunctional CCA protein (Erwinia tasmaniensis (strain DSM 17950 / CFBP 7177 / CIP 109463 / NCPPB 4357 / Et1/99)).